Consider the following 328-residue polypeptide: Tetraacyldisaccharide 4'-kinase (328 aa).

ATP is bound at residue 55 to 62 (TAGGNGKT).

The protein belongs to the LpxK family.

It carries out the reaction a lipid A disaccharide + ATP = a lipid IVA + ADP + H(+). The protein operates within glycolipid biosynthesis; lipid IV(A) biosynthesis; lipid IV(A) from (3R)-3-hydroxytetradecanoyl-[acyl-carrier-protein] and UDP-N-acetyl-alpha-D-glucosamine: step 6/6. In terms of biological role, transfers the gamma-phosphate of ATP to the 4'-position of a tetraacyldisaccharide 1-phosphate intermediate (termed DS-1-P) to form tetraacyldisaccharide 1,4'-bis-phosphate (lipid IVA). The polypeptide is Tetraacyldisaccharide 4'-kinase (Yersinia pseudotuberculosis serotype I (strain IP32953)).